A 116-amino-acid chain; its full sequence is Non-specific lipid-transfer protein 10 (116 aa).

Residues 1-22 (MMRVVLPLCLLLASIFAWGSEA) form the signal peptide. Disulfide bonds link Cys26-Cys73, Cys36-Cys50, Cys51-Cys98, and Cys71-Cys112.

Belongs to the plant LTP family.

In terms of biological role, plant non-specific lipid-transfer proteins transfer phospholipids as well as galactolipids across membranes. May play a role in wax or cutin deposition in the cell walls of expanding epidermal cells and certain secretory tissues. This chain is Non-specific lipid-transfer protein 10 (LTP10), found in Arabidopsis thaliana (Mouse-ear cress).